We begin with the raw amino-acid sequence, 550 residues long: (+)-germacrene D synthase (550 aa).

The Mg(2+) site is built by Asp-304, Asp-308, and Glu-455. The DDXXD motif motif lies at Asp-304 to Asp-308.

The protein belongs to the terpene synthase family. Tpsa subfamily. Requires Mg(2+) as cofactor. Mn(2+) is required as a cofactor. It depends on Co(2+) as a cofactor. The cofactor is Ni(2+).

It is found in the cytoplasm. It carries out the reaction (2E,6E)-farnesyl diphosphate = (+)-germacrene D + diphosphate. Its pathway is secondary metabolite biosynthesis; terpenoid biosynthesis. Involved in the biosynthesis of germacrene D. Can use farnesyl diphosphate as substrate, but not geranyl diphosphate. Produces mainly (+)-germacrene D along with germacrene B and a number of minor by-products. The sequence is that of (+)-germacrene D synthase from Zingiber officinale (Ginger).